Consider the following 816-residue polypeptide: Protein kinase C-binding protein NELL2 (816 aa).

The first 21 residues, methionine 1 to glycine 21, serve as a signal peptide directing secretion. One can recognise a Laminin G-like domain in the interval isoleucine 30–alanine 258. N-linked (GlcNAc...) asparagine glycans are attached at residues asparagine 53, asparagine 225, asparagine 293, and asparagine 298. A VWFC 1 domain is found at arginine 272–lysine 331. Positions glycine 397–glutamate 439 constitute an EGF-like 1 domain. 3 disulfides stabilise this stretch: cysteine 401–cysteine 413, cysteine 407–cysteine 422, and cysteine 424–cysteine 438. Ca(2+) contacts are provided by aspartate 440, isoleucine 441, and glutamate 443. Residues aspartate 440 to threonine 481 enclose the EGF-like 2; calcium-binding domain. 9 disulfide bridges follow: cysteine 444–cysteine 457, cysteine 451–cysteine 466, cysteine 468–cysteine 480, cysteine 486–cysteine 499, cysteine 493–cysteine 508, cysteine 510–cysteine 521, cysteine 525–cysteine 535, cysteine 529–cysteine 541, and cysteine 543–cysteine 552. Asparagine 459, threonine 460, and serine 463 together coordinate Ca(2+). One can recognise an EGF-like 3; calcium-binding domain in the interval glutamate 482–lysine 522. Residue asparagine 517 is glycosylated (N-linked (GlcNAc...) asparagine). One can recognise an EGF-like 4 domain in the interval alanine 523 to glutamate 553. O-linked (GlcNAc...) threonine glycosylation is present at threonine 548. Positions 555, 556, and 558 each coordinate Ca(2+). The EGF-like 5; calcium-binding domain maps to aspartate 555–glutamate 601. 3 cysteine pairs are disulfide-bonded: cysteine 559/cysteine 572, cysteine 566/cysteine 581, and cysteine 583/cysteine 600. Asparagine 574, leucine 575, and tryptophan 578 together coordinate Ca(2+). Aspartate 602, isoleucine 603, and glutamate 605 together coordinate Ca(2+). The EGF-like 6; calcium-binding domain occupies aspartate 602 to threonine 637. Intrachain disulfides connect cysteine 606-cysteine 619, cysteine 613-cysteine 628, and cysteine 630-cysteine 636. N-linked (GlcNAc...) asparagine glycosylation occurs at asparagine 615. Asparagine 621, leucine 622, and glycine 625 together coordinate Ca(2+). Asparagine 635 is a glycosylation site (N-linked (GlcNAc...) asparagine). 2 consecutive VWFC domains span residues glycine 638–aspartate 693 and serine 698–valine 756.

As to quaternary structure, homotrimer. Binds to PRKCB. Interacts with NICOL1; this interaction triggers epididymal differentiation.

Its subcellular location is the secreted. Plays multiple roles in neural tissues, regulates neuronal proliferation, survival, differentiation, polarization, as well as axon guidance and synaptic functions. Plays an important role in axon development during neuronal differentiation through the MAPK intracellular signaling pathway. Via binding to its receptor ROBO3, plays a role in axon guidance, functions as a repulsive guidance cue for commissural axons, helping to steer them across the spinal cord midline. Required for neuron survival through the modulation of MAPK signaling pathways too. Involved in the regulation of hypothalamic GNRH secretion and the control of puberty. Its function is as follows. Testicular luminal protein that signals through a ROS1-pathway to regulate the epididymal initial segment (IS) maturation, sperm maturation and male fertility. This chain is Protein kinase C-binding protein NELL2 (NELL2), found in Bos taurus (Bovine).